The following is a 195-amino-acid chain: 2-hydroxychromene-2-carboxylate isomerase (195 aa).

The active-site Nucleophile is Ser13. Residue Ser13 coordinates glutathione. Residues Lys45 and 55–56 (NR) each bind substrate. Position 181 to 184 (181 to 184 (WGND)) interacts with glutathione.

The protein belongs to the GST superfamily. NadH family. The cofactor is glutathione.

The enzyme catalyses 2-hydroxychromene-2-carboxylate = (3E)-4-(2-hydroxyphenyl)-2-oxobut-3-enoate. Its activity is regulated as follows. Activated by salicylate. Its function is as follows. Involved in the naphthalene and naphthalenesulfonate catabolic pathway. Catalyzes the reversible glutathione-dependent isomerization of 2-hydroxychromene-2-carboxylate (HCCA) to trans-O-hydroxybenzylidenepyruvate (THBPA). It can also use 2-hydroxybenzo[g]chromene-2-carboxylate as substrate. In Sphingobium xenophagum, this protein is 2-hydroxychromene-2-carboxylate isomerase (nsaD).